A 175-amino-acid chain; its full sequence is Major pollen allergen Pha a 5.4 (175 aa).

This sequence belongs to the Poa p IX/Phl p VI allergen family.

In Phalaris aquatica (Canary grass), this protein is Major pollen allergen Pha a 5.4.